Consider the following 421-residue polypeptide: Serine hydroxymethyltransferase (421 aa).

(6S)-5,6,7,8-tetrahydrofolate is bound by residues leucine 121 and 125–127 (GHL). Lysine 229 carries the post-translational modification N6-(pyridoxal phosphate)lysine.

Belongs to the SHMT family. As to quaternary structure, homodimer. It depends on pyridoxal 5'-phosphate as a cofactor.

Its subcellular location is the cytoplasm. It catalyses the reaction (6R)-5,10-methylene-5,6,7,8-tetrahydrofolate + glycine + H2O = (6S)-5,6,7,8-tetrahydrofolate + L-serine. It functions in the pathway one-carbon metabolism; tetrahydrofolate interconversion. The protein operates within amino-acid biosynthesis; glycine biosynthesis; glycine from L-serine: step 1/1. In terms of biological role, catalyzes the reversible interconversion of serine and glycine with tetrahydrofolate (THF) serving as the one-carbon carrier. This reaction serves as the major source of one-carbon groups required for the biosynthesis of purines, thymidylate, methionine, and other important biomolecules. Also exhibits THF-independent aldolase activity toward beta-hydroxyamino acids, producing glycine and aldehydes, via a retro-aldol mechanism. This is Serine hydroxymethyltransferase from Haemophilus influenzae (strain PittEE).